Reading from the N-terminus, the 35-residue chain is Bacteriocin SRCAM 1580 (35 aa).

It belongs to the bacteriocin class IIA/YGNGV family.

Its subcellular location is the secreted. Bacteriocin with antibacterial activity against C.jejuni. This is Bacteriocin SRCAM 1580 from Niallia circulans (Bacillus circulans).